The chain runs to 507 residues: ATP synthase subunit alpha, chloroplastic (507 aa).

170 to 177 serves as a coordination point for ATP; sequence GDRQTGKT.

This sequence belongs to the ATPase alpha/beta chains family. As to quaternary structure, F-type ATPases have 2 components, CF(1) - the catalytic core - and CF(0) - the membrane proton channel. CF(1) has five subunits: alpha(3), beta(3), gamma(1), delta(1), epsilon(1). CF(0) has four main subunits: a, b, b' and c.

The protein localises to the plastid. It localises to the chloroplast thylakoid membrane. The enzyme catalyses ATP + H2O + 4 H(+)(in) = ADP + phosphate + 5 H(+)(out). Produces ATP from ADP in the presence of a proton gradient across the membrane. The alpha chain is a regulatory subunit. In Sorghum bicolor (Sorghum), this protein is ATP synthase subunit alpha, chloroplastic.